Here is a 55-residue protein sequence, read N- to C-terminus: Large ribosomal subunit protein bL33 (55 aa).

This sequence belongs to the bacterial ribosomal protein bL33 family.

The sequence is that of Large ribosomal subunit protein bL33 from Buchnera aphidicola subsp. Baizongia pistaciae (strain Bp).